The chain runs to 270 residues: Tryptophan synthase alpha chain (270 aa).

Catalysis depends on proton acceptor residues Glu49 and Asp60.

Belongs to the TrpA family. Tetramer of two alpha and two beta chains.

It carries out the reaction (1S,2R)-1-C-(indol-3-yl)glycerol 3-phosphate + L-serine = D-glyceraldehyde 3-phosphate + L-tryptophan + H2O. It participates in amino-acid biosynthesis; L-tryptophan biosynthesis; L-tryptophan from chorismate: step 5/5. Its function is as follows. The alpha subunit is responsible for the aldol cleavage of indoleglycerol phosphate to indole and glyceraldehyde 3-phosphate. In Thermobifida fusca (strain YX), this protein is Tryptophan synthase alpha chain.